Here is a 178-residue protein sequence, read N- to C-terminus: Leukemia NUP98 fusion partner 1 (178 aa).

3 disordered regions span residues 28 to 55 (EDQR…PLPV), 89 to 108 (SEDG…HSKI), and 147 to 178 (IKSR…KGPE). Residues 34-47 (RERHRLQATSHRKT) show a composition bias toward basic residues. Basic and acidic residues predominate over residues 147-167 (IKSRKKVEEERSSRKEEHGEA).

The protein is Leukemia NUP98 fusion partner 1 (LNP1) of Homo sapiens (Human).